A 312-amino-acid polypeptide reads, in one-letter code: NAD(P)(+)--arginine ADP-ribosyltransferase 1 (312 aa).

Positions Met1–Ala20 are cleaved as a signal peptide. Residues Ala21–Gly31 constitute a propeptide that is removed on maturation. 2 disulfides stabilise this stretch: Cys51-Cys260 and Cys159-Cys208. The 186-residue stretch at Ile71–Ser256 folds into the TR mART core domain. Residues Tyr108, Arg164, and Gln183 each coordinate NAD(+). Residue Arg164 is part of the active site. Ser186 is a catalytic residue. Ser217 is a binding site for NAD(+). Glu224 is a catalytic residue. The propeptide occupies Gly267–Val312.

It belongs to the Arg-specific ADP-ribosyltransferase family.

Its subcellular location is the secreted. The protein resides in the extracellular space. The catalysed reaction is L-arginyl-[protein] + NAD(+) = N(omega)-(ADP-D-ribosyl)-L-arginyl-[protein] + nicotinamide + H(+). This Gallus gallus (Chicken) protein is NAD(P)(+)--arginine ADP-ribosyltransferase 1.